A 308-amino-acid chain; its full sequence is Homoserine O-acetyltransferase (308 aa).

C142 (acyl-thioester intermediate) is an active-site residue. Substrate is bound by residues K163 and S192. H235 (proton acceptor) is an active-site residue. The active site involves E237. R249 contributes to the substrate binding site.

This sequence belongs to the MetA family.

The protein localises to the cytoplasm. The catalysed reaction is L-homoserine + acetyl-CoA = O-acetyl-L-homoserine + CoA. It functions in the pathway amino-acid biosynthesis; L-methionine biosynthesis via de novo pathway; O-acetyl-L-homoserine from L-homoserine: step 1/1. In terms of biological role, transfers an acetyl group from acetyl-CoA to L-homoserine, forming acetyl-L-homoserine. The chain is Homoserine O-acetyltransferase from Agrobacterium fabrum (strain C58 / ATCC 33970) (Agrobacterium tumefaciens (strain C58)).